Here is a 348-residue protein sequence, read N- to C-terminus: D-alanine--D-alanine ligase (348 aa).

The 203-residue stretch at 132–334 (KQVLATVGVP…YSDLIEKLVM (203 aa)) folds into the ATP-grasp domain. ATP is bound at residue 162 to 217 (LETLSFPIFVKPANMGSSVGISKATDESSLRSAIDLALKYDSRILIEQGVTAREIE). Residues Asp-288, Glu-301, and Asn-303 each coordinate Mg(2+).

This sequence belongs to the D-alanine--D-alanine ligase family. Mg(2+) serves as cofactor. It depends on Mn(2+) as a cofactor.

It localises to the cytoplasm. It catalyses the reaction 2 D-alanine + ATP = D-alanyl-D-alanine + ADP + phosphate + H(+). Its pathway is cell wall biogenesis; peptidoglycan biosynthesis. Cell wall formation. This Streptococcus agalactiae serotype Ia (strain ATCC 27591 / A909 / CDC SS700) protein is D-alanine--D-alanine ligase.